The sequence spans 206 residues: Tumor protein D54 (206 aa).

Residue M1 is modified to N-acetylmethionine. Positions 1 to 14 (MDSAGQDINLNSPN) are enriched in polar residues. The disordered stretch occupies residues 1-24 (MDSAGQDINLNSPNKGLLSDSMTD). S3, S12, S19, and S21 each carry phosphoserine. A coiled-coil region spans residues 38–82 (VEGLTEAEEEELRAELTKVEEEIVTLRQVLAAKERHCGELKRRLG). Phosphoserine is present on residues S96, S149, and S161. The residue at position 163 (T163) is a Phosphothreonine. A Phosphoserine modification is found at S166. Residue T173 is modified to Phosphothreonine. Basic and acidic residues predominate over residues 175–185 (KSKVVGDRENG). Positions 175-206 (KSKVVGDRENGSDSLPSSAGSGDKPLSDPAPF) are disordered. A phosphoserine mark is found at S192 and S195.

Belongs to the TPD52 family. As to quaternary structure, forms a homodimer or heterodimer with other members of the family. Interacts with MAL2.

This Pongo abelii (Sumatran orangutan) protein is Tumor protein D54 (TPD52L2).